Reading from the N-terminus, the 239-residue chain is 2-C-methyl-D-erythritol 4-phosphate cytidylyltransferase (239 aa).

It belongs to the IspD/TarI cytidylyltransferase family. IspD subfamily.

It catalyses the reaction 2-C-methyl-D-erythritol 4-phosphate + CTP + H(+) = 4-CDP-2-C-methyl-D-erythritol + diphosphate. Its pathway is isoprenoid biosynthesis; isopentenyl diphosphate biosynthesis via DXP pathway; isopentenyl diphosphate from 1-deoxy-D-xylulose 5-phosphate: step 2/6. Functionally, catalyzes the formation of 4-diphosphocytidyl-2-C-methyl-D-erythritol from CTP and 2-C-methyl-D-erythritol 4-phosphate (MEP). This chain is 2-C-methyl-D-erythritol 4-phosphate cytidylyltransferase, found in Acinetobacter baylyi (strain ATCC 33305 / BD413 / ADP1).